Consider the following 65-residue polypeptide: Large ribosomal subunit protein bL35 (65 aa).

A compositionally biased stretch (basic residues) spans 1–16 (MPKQKTHRASAKRFKR). The interval 1-20 (MPKQKTHRASAKRFKRTGSG) is disordered.

Belongs to the bacterial ribosomal protein bL35 family.

The protein is Large ribosomal subunit protein bL35 of Streptococcus pyogenes serotype M1.